The following is an 834-amino-acid chain: Glycerol-3-phosphate acyltransferase (834 aa).

The HXXXXD motif signature appears at 309 to 314 (CHRSHI).

Belongs to the GPAT/DAPAT family.

It is found in the cell inner membrane. It carries out the reaction sn-glycerol 3-phosphate + an acyl-CoA = a 1-acyl-sn-glycero-3-phosphate + CoA. Its pathway is phospholipid metabolism; CDP-diacylglycerol biosynthesis; CDP-diacylglycerol from sn-glycerol 3-phosphate: step 1/3. The polypeptide is Glycerol-3-phosphate acyltransferase (Pseudomonas fluorescens (strain ATCC BAA-477 / NRRL B-23932 / Pf-5)).